The sequence spans 116 residues: NADH-ubiquinone oxidoreductase chain 3 (116 aa).

3 helical membrane-spanning segments follow: residues F10 to A30, F64 to L84, and V88 to V108.

It belongs to the complex I subunit 3 family.

It localises to the mitochondrion membrane. It carries out the reaction a ubiquinone + NADH + 5 H(+)(in) = a ubiquinol + NAD(+) + 4 H(+)(out). Its function is as follows. Core subunit of the mitochondrial membrane respiratory chain NADH dehydrogenase (Complex I) that is believed to belong to the minimal assembly required for catalysis. Complex I functions in the transfer of electrons from NADH to the respiratory chain. The immediate electron acceptor for the enzyme is believed to be ubiquinone. The polypeptide is NADH-ubiquinone oxidoreductase chain 3 (ND3) (Patiria pectinifera (Starfish)).